Consider the following 311-residue polypeptide: MHEIYLAGGCFWGVEEYFSRVPGVTDAVSGYANGRGETTKYELINQTGHAETVHVTYDAKQISLKEILLHYFRIINPTSKNKQGNDVGTQYRTGVYYTDDKDLEVINQVFDEVAKKYDQPLAVEKENLKNFVVAEDYHQDYLKKNPNGYCHINVNQAAYPVIDASKYPKPSDEELKKTLSPEEYAVTQENQTERAFSNRYWDKFESGIYVDIATGEPLFSSKDKFESGCGWPSFTQPISPDVVTYKEDKSYNMTRMEVRSRVGDSHLGHVFTDGPQDKGGLRYCINSLSIRFIPKDQMEEKGYAYLLDYVD.

The tract at residues 1–155 is peptide methionine sulfoxide reductase A; it reads MHEIYLAGGC…PNGYCHINVN (155 aa). Cysteine 10 is an active-site residue. The MsrB domain occupies 172 to 295; it reads DEELKKTLSP…NSLSIRFIPK (124 aa). Catalysis depends on cysteine 284, which acts as the Nucleophile.

This sequence in the N-terminal section; belongs to the MsrA Met sulfoxide reductase family. In the C-terminal section; belongs to the MsrB Met sulfoxide reductase family.

It carries out the reaction L-methionyl-[protein] + [thioredoxin]-disulfide + H2O = L-methionyl-(S)-S-oxide-[protein] + [thioredoxin]-dithiol. The catalysed reaction is [thioredoxin]-disulfide + L-methionine + H2O = L-methionine (S)-S-oxide + [thioredoxin]-dithiol. The enzyme catalyses L-methionyl-[protein] + [thioredoxin]-disulfide + H2O = L-methionyl-(R)-S-oxide-[protein] + [thioredoxin]-dithiol. In terms of biological role, has an important function as a repair enzyme for proteins that have been inactivated by oxidation. Catalyzes the reversible oxidation-reduction of methionine sulfoxide in proteins to methionine. The protein is Peptide methionine sulfoxide reductase MsrA/MsrB 2 (msrAB2) of Streptococcus pneumoniae serotype 4 (strain ATCC BAA-334 / TIGR4).